The following is an 81-amino-acid chain: Small ribosomal subunit protein bS20 (81 aa).

Residues 1–11 (MPNIKSQKKRV) are compositionally biased toward basic residues. The segment at 1-20 (MPNIKSQKKRVLTNEKSRAS) is disordered.

The protein belongs to the bacterial ribosomal protein bS20 family.

Its function is as follows. Binds directly to 16S ribosomal RNA. The polypeptide is Small ribosomal subunit protein bS20 (Mesoplasma florum (strain ATCC 33453 / NBRC 100688 / NCTC 11704 / L1) (Acholeplasma florum)).